The chain runs to 405 residues: Coiled-coil domain-containing protein 91 (405 aa).

The interval 1-16 (MDDDDFGGFEAAETFD) is GGA1-binding motif. Positions 1–27 (MDDDDFGGFEAAETFDGGNGETQTTSP) are disordered. A phosphoserine mark is found at S43 and S46. Residues 126-376 (GANVSNIQLR…QKRLDQVIRQ (251 aa)) are a coiled coil. A homodimerization region spans residues 210–377 (LSIIVDEYKH…KRLDQVIRQR (168 aa)).

As to quaternary structure, homodimer. Interacts with GGA1, GGA2 and AP1G1.

The protein resides in the membrane. It is found in the golgi apparatus. It localises to the trans-Golgi network membrane. The protein localises to the trans-Golgi network. Involved in the regulation of membrane traffic through the trans-Golgi network (TGN). Functions in close cooperation with the GGAs in the sorting of hydrolases to lysosomes. This Pongo abelii (Sumatran orangutan) protein is Coiled-coil domain-containing protein 91 (CCDC91).